Reading from the N-terminus, the 367-residue chain is Uroporphyrinogen decarboxylase (367 aa).

N-acetylmethionine is present on methionine 1. Arginine 37, alanine 39, arginine 41, arginine 50, aspartate 86, tyrosine 164, serine 219, and histidine 339 together coordinate coproporphyrinogen I. Arginine 37, alanine 39, and arginine 41 together coordinate coproporphyrinogen III. Coproporphyrinogen III is bound by residues aspartate 86, tyrosine 164, serine 219, and histidine 339.

Belongs to the uroporphyrinogen decarboxylase family. Homodimer.

The protein localises to the cytoplasm. It localises to the cytosol. It carries out the reaction uroporphyrinogen III + 4 H(+) = coproporphyrinogen III + 4 CO2. It catalyses the reaction uroporphyrinogen I + 4 H(+) = coproporphyrinogen I + 4 CO2. The protein operates within porphyrin-containing compound metabolism; protoporphyrin-IX biosynthesis; coproporphyrinogen-III from 5-aminolevulinate: step 4/4. Its function is as follows. Catalyzes the sequential decarboxylation of the four acetate side chains of uroporphyrinogen to form coproporphyrinogen and participates in the fifth step in the heme biosynthetic pathway. Isomer I or isomer III of uroporphyrinogen may serve as substrate, but only coproporphyrinogen III can ultimately be converted to heme. In vitro also decarboxylates pentacarboxylate porphyrinogen I. The sequence is that of Uroporphyrinogen decarboxylase from Homo sapiens (Human).